A 491-amino-acid polypeptide reads, in one-letter code: MISKQEYQAQAAQGYNRIPLVQELLADLDTPLSLYLKLANRPYTYLLESVVGGERFGRYSFIGLPCSHYLKASGKHVDVYQNGEIVEQHDGNPLPFIEAFHNRFKTPEIPSLPRFTGGLVGYFGYETIYNFEHFAHRLKNTTKADPLGTPDILLMLSQELAVIDNLSGKIHLVVYADPSQPDGYERARERLEDIRTQLRQSCAIPLSLGSKHTEAVSEFGEEPFKACVNKIKDYIFAGDCMQVVPSQRMSMEFTDSPLALYRALRTLNPSPYLFYYDFGDFHIVGSSPEILVRRERNDVIVRPIAGTRLRGKTPAEDLANEQDLLSDAKEIAEHVMLIDLGRNDVGRISKTGEVKVTDKMVIEKYSHVMHIVSNVEGRLKDGMTNMDILAATFPAGTLSGAPKVRAMEIIEEVEPSKRGIYGGAVGVWGFNNDMDLAIAIRTAVVKNNTLYVQSGAGVVADSDPASEWQETQNKARAVIHAAQMVQEGLDK.

L-tryptophan contacts are provided by residues serine 49 and 271–273; that span reads PYL. Residue 306-307 coordinates chorismate; the sequence is GT. Glutamate 333 contacts Mg(2+). Chorismate contacts are provided by residues tyrosine 421, arginine 441, 455 to 457, and glycine 457; that span reads GAG. Position 470 (glutamate 470) interacts with Mg(2+).

The protein belongs to the anthranilate synthase component I family. Heterotetramer consisting of two non-identical subunits: a beta subunit (TrpG) and a large alpha subunit (TrpE). Mg(2+) is required as a cofactor.

The enzyme catalyses chorismate + L-glutamine = anthranilate + pyruvate + L-glutamate + H(+). Its pathway is amino-acid biosynthesis; L-tryptophan biosynthesis; L-tryptophan from chorismate: step 1/5. Feedback inhibited by tryptophan. Functionally, part of a heterotetrameric complex that catalyzes the two-step biosynthesis of anthranilate, an intermediate in the biosynthesis of L-tryptophan. In the first step, the glutamine-binding beta subunit (TrpG) of anthranilate synthase (AS) provides the glutamine amidotransferase activity which generates ammonia as a substrate that, along with chorismate, is used in the second step, catalyzed by the large alpha subunit of AS (TrpE) to produce anthranilate. In the absence of TrpG, TrpE can synthesize anthranilate directly from chorismate and high concentrations of ammonia. The chain is Anthranilate synthase component 1 (trpE) from Neisseria meningitidis serogroup B (strain ATCC BAA-335 / MC58).